We begin with the raw amino-acid sequence, 215 residues long: Adenylate kinase (215 aa).

14–19 (GVGKGT) provides a ligand contact to ATP. An NMP region spans residues 34 to 63 (STGDIFRSVMQEQGALSQTLAHYMNQGLYV). Residues Thr-35, Arg-40, 61-63 (LYV), 91-94 (GYPR), and Gln-98 each bind AMP. Positions 128–165 (NRLVCPSCGSVYNKQSKPPLKANQCDRCHATLQARNDD) are LID. Arg-129 serves as a coordination point for ATP. Residues Cys-132 and Cys-135 each contribute to the Zn(2+) site. 138-139 (VY) contributes to the ATP binding site. Zn(2+)-binding residues include Cys-152 and Cys-155. AMP contacts are provided by Arg-162 and Arg-173. Residue Gln-211 coordinates ATP.

It belongs to the adenylate kinase family. Monomer.

It localises to the cytoplasm. It catalyses the reaction AMP + ATP = 2 ADP. Its pathway is purine metabolism; AMP biosynthesis via salvage pathway; AMP from ADP: step 1/1. Functionally, catalyzes the reversible transfer of the terminal phosphate group between ATP and AMP. Plays an important role in cellular energy homeostasis and in adenine nucleotide metabolism. This chain is Adenylate kinase, found in Mycoplasma pneumoniae (strain ATCC 29342 / M129 / Subtype 1) (Mycoplasmoides pneumoniae).